The primary structure comprises 250 residues: MGSKHRVDTKDKKRTRKNAEFGREKRNSGNQELSNEPEKDTIMEGDEAEEDEQNSSSDESSKIIDNEQSDAEEDDDEEEEDDDFPRKKKSKNSKHDDGSTGFSAAVNAILSSHLKAYDRKDPIMARNKKVLKQSESEKLEYKAKKALLAEKKKLLGKARKTDIIPIASGEDRSENIRKVLEKETALRKIAQKGAVKLFNAILATQVKTEKEVSENLSEIKNKEEKKELITEVSKEKFLDLVKAAAGSDNE.

The segment covering 1-27 has biased composition (basic and acidic residues); sequence MGSKHRVDTKDKKRTRKNAEFGREKRN. Residues 1–101 form a disordered region; that stretch reads MGSKHRVDTK…NSKHDDGSTG (101 aa). Composition is skewed to acidic residues over residues 43–53 and 67–83; these read MEGDEAEEDEQ and EQSD…EDDD. S69 carries the post-translational modification Phosphoserine.

Belongs to the RRP15 family.

The protein localises to the nucleus. Its subcellular location is the nucleolus. Constituent of pre-60S ribosomal particles. Required for large subunit rRNA maturation, in particular processing of the 27S pre-rRNA at the A3 and B1 sites to yield 5.8S and 25S rRNA. In Saccharomyces cerevisiae (strain ATCC 204508 / S288c) (Baker's yeast), this protein is Ribosomal RNA-processing protein 15.